We begin with the raw amino-acid sequence, 180 residues long: Cell wall / vacuolar inhibitor of fructosidase 2 (180 aa).

Positions 1–23 are cleaved as a signal peptide; sequence MASSLIFLLLVTLTFSASTLISA. Asn-26 is a glycosylation site (N-linked (GlcNAc...) asparagine). A disulfide bridge links Cys-35 with Cys-44. N-linked (GlcNAc...) asparagine glycosylation is found at Asn-73 and Asn-84. A disulfide bond links Cys-101 and Cys-141.

It belongs to the PMEI family. In terms of tissue distribution, mostly expressed at low levels in seedlings, stems, leaves and flowers (in all organs), and, to a lower extent, in roots and siliques.

Its subcellular location is the vacuole. Its function is as follows. Inhibits fructosidases from both cell wall (cell wall invertase CWI) and vacuoles (vacuolar invertase VI). This chain is Cell wall / vacuolar inhibitor of fructosidase 2 (C/VIF2), found in Arabidopsis thaliana (Mouse-ear cress).